Reading from the N-terminus, the 344-residue chain is tRNA(Ile)-lysidine synthase (344 aa).

ATP is bound at residue 35–40; sequence SGGPDS.

Belongs to the tRNA(Ile)-lysidine synthase family.

Its subcellular location is the cytoplasm. The enzyme catalyses cytidine(34) in tRNA(Ile2) + L-lysine + ATP = lysidine(34) in tRNA(Ile2) + AMP + diphosphate + H(+). In terms of biological role, ligates lysine onto the cytidine present at position 34 of the AUA codon-specific tRNA(Ile) that contains the anticodon CAU, in an ATP-dependent manner. Cytidine is converted to lysidine, thus changing the amino acid specificity of the tRNA from methionine to isoleucine. In Methylobacterium sp. (strain 4-46), this protein is tRNA(Ile)-lysidine synthase.